A 216-amino-acid polypeptide reads, in one-letter code: Heart- and neural crest derivatives-expressed protein 1 (216 aa).

3 disordered regions span residues 1–20 (MNLVGSYAHHHHHHHSHPPH), 53–109 (APDF…RTES), and 165–203 (ELKKTDGGRESKRKRELPQQPESFPPASGPGEKRIKGRT). The span at 8–18 (AHHHHHHHSHP) shows a compositional bias: basic residues. A compositionally biased stretch (low complexity) spans 65–78 (TAVAAAAYGPDARP). Residues 92–104 (LPKRKGSGPKKER) show a composition bias toward basic residues. The region spanning 94–146 (KRKGSGPKKERRRTESINSAFAELRECIPNVPADTKLSKIKTLRLATSYIAYL) is the bHLH domain. Residue T107 is modified to Phosphothreonine; by PLK4. S109 is subject to Phosphoserine; by PLK4. Basic and acidic residues predominate over residues 165 to 174 (ELKKTDGGRE).

Efficient DNA binding requires dimerization with another bHLH protein. Forms homodimers and heterodimers with TCF3 gene products E12 and E47, HAND2 and HEY1, HEY2 and HEYL (hairy-related transcription factors). Interacts with MDFIC. Interacts with SOX15; the interaction enhances HAND1-induced differentiation of trophoblast giant cells. Phosphorylation by PLK4 disrupts the interaction with MDFIC and leads to translocation into the nucleoplasm, allowing dimerization and transcription factor activity. As to expression, smooth muscle cells of the gut and adrenal tissue.

The protein localises to the nucleus. The protein resides in the nucleoplasm. It is found in the nucleolus. In terms of biological role, transcription factor that plays an essential role in both trophoblast giant cell differentiation and in cardiac morphogenesis. Binds the DNA sequence 5'-NRTCTG-3' (non-canonical E-box). Acts as a transcriptional repressor of SOX15. In the adult, could be required for ongoing expression of cardiac-specific genes. In Mus musculus (Mouse), this protein is Heart- and neural crest derivatives-expressed protein 1 (Hand1).